The sequence spans 329 residues: DNA-directed RNA polymerase subunit alpha (329 aa).

The segment at 1 to 235 (MQGSVTEFLK…EQLDAFVDLR (235 aa)) is alpha N-terminal domain (alpha-NTD). The alpha C-terminal domain (alpha-CTD) stretch occupies residues 249 to 329 (FDPILLRPVD…NWPPASIAED (81 aa)).

It belongs to the RNA polymerase alpha chain family. In terms of assembly, homodimer. The RNAP catalytic core consists of 2 alpha, 1 beta, 1 beta' and 1 omega subunit. When a sigma factor is associated with the core the holoenzyme is formed, which can initiate transcription.

It catalyses the reaction RNA(n) + a ribonucleoside 5'-triphosphate = RNA(n+1) + diphosphate. Its function is as follows. DNA-dependent RNA polymerase catalyzes the transcription of DNA into RNA using the four ribonucleoside triphosphates as substrates. This chain is DNA-directed RNA polymerase subunit alpha, found in Aliivibrio salmonicida (strain LFI1238) (Vibrio salmonicida (strain LFI1238)).